Reading from the N-terminus, the 168-residue chain is Peptidoglycan-associated lipoprotein (168 aa).

A signal peptide spans 1-24 (MGRIAALTRNPVMIALVAMLAIAG). Residue Cys-25 is the site of N-palmitoyl cysteine attachment. Cys-25 carries S-diacylglycerol cysteine lipidation. The OmpA-like domain occupies 50-167 (AQDFTVNIGD…RAVTTLSGAG (118 aa)).

This sequence belongs to the Pal lipoprotein family. As to quaternary structure, the Tol-Pal system is composed of five core proteins: the inner membrane proteins TolA, TolQ and TolR, the periplasmic protein TolB and the outer membrane protein Pal. They form a network linking the inner and outer membranes and the peptidoglycan layer.

The protein resides in the cell outer membrane. Part of the Tol-Pal system, which plays a role in outer membrane invagination during cell division and is important for maintaining outer membrane integrity. The polypeptide is Peptidoglycan-associated lipoprotein (Mesorhizobium japonicum (strain LMG 29417 / CECT 9101 / MAFF 303099) (Mesorhizobium loti (strain MAFF 303099))).